Reading from the N-terminus, the 282-residue chain is MDRTLESLRHIIAQVLPHRDPALVFKDLNVVSMLQEFWESKQQQKAAFPSEGVVVYESLPAPGPPFVSYVTLPGGSCFGNFQCCLSRAEARRDAAKVALINSLFNELPSRRITKEFIMESVQEAVASTSGTLDDADDPSTSVGAYHYMLESNMGKTMLEFQELMTIFQLLHWNGSLKALRETKCSRQEVISYYSQYSLDEKMRSHMALDWIMKERDSPGIVSQELRMALRQLEEARKAGQELRFYKEKKEILSLALTQICSDPDTSSPSDDQLSLTALCGYH.

The protein belongs to the LIX1 family.

The protein is Protein limb expression 1 homolog (LIX1) of Homo sapiens (Human).